Reading from the N-terminus, the 461-residue chain is tRNA modification GTPase MnmE (461 aa).

3 residues coordinate (6S)-5-formyl-5,6,7,8-tetrahydrofolate: Arg23, Glu88, and Arg127. Residues 223 to 383 (GLNTVIVGKP…LKECIKNLFF (161 aa)) enclose the TrmE-type G domain. Asn233 contacts K(+). GTP is bound by residues 233–238 (NVGKSS), 252–258 (TEIPGTT), and 277–280 (DTAG). Residue Ser237 participates in Mg(2+) binding. Residues Thr252, Ile254, and Thr257 each coordinate K(+). Residue Thr258 coordinates Mg(2+). Lys461 provides a ligand contact to (6S)-5-formyl-5,6,7,8-tetrahydrofolate.

It belongs to the TRAFAC class TrmE-Era-EngA-EngB-Septin-like GTPase superfamily. TrmE GTPase family. Homodimer. Heterotetramer of two MnmE and two MnmG subunits. K(+) serves as cofactor.

It localises to the cytoplasm. In terms of biological role, exhibits a very high intrinsic GTPase hydrolysis rate. Involved in the addition of a carboxymethylaminomethyl (cmnm) group at the wobble position (U34) of certain tRNAs, forming tRNA-cmnm(5)s(2)U34. The sequence is that of tRNA modification GTPase MnmE from Clostridium botulinum (strain Loch Maree / Type A3).